We begin with the raw amino-acid sequence, 129 residues long: Small ribosomal subunit protein uS11 (129 aa).

It belongs to the universal ribosomal protein uS11 family. As to quaternary structure, part of the 30S ribosomal subunit. Interacts with proteins S7 and S18. Binds to IF-3.

Located on the platform of the 30S subunit, it bridges several disparate RNA helices of the 16S rRNA. Forms part of the Shine-Dalgarno cleft in the 70S ribosome. The polypeptide is Small ribosomal subunit protein uS11 (Nitratidesulfovibrio vulgaris (strain DSM 19637 / Miyazaki F) (Desulfovibrio vulgaris)).